A 346-amino-acid polypeptide reads, in one-letter code: Ornithine carbamoyltransferase, catabolic (346 aa).

Carbamoyl phosphate-binding positions include 58–61, N85, R109, and 136–139; these read STRT and HPTQ. L-ornithine contacts are provided by residues N168, D239, and 243-244; that span reads SL. Residues 280 to 281 and R332 contribute to the carbamoyl phosphate site; that span reads CL.

It belongs to the aspartate/ornithine carbamoyltransferase superfamily. OTCase family.

It localises to the cytoplasm. The enzyme catalyses carbamoyl phosphate + L-ornithine = L-citrulline + phosphate + H(+). It functions in the pathway amino-acid degradation; L-arginine degradation via ADI pathway; carbamoyl phosphate from L-arginine: step 2/2. Functionally, reversibly catalyzes the transfer of the carbamoyl group from carbamoyl phosphate (CP) to the N(epsilon) atom of ornithine (ORN) to produce L-citrulline. This Mycoplasma pneumoniae (strain ATCC 29342 / M129 / Subtype 1) (Mycoplasmoides pneumoniae) protein is Ornithine carbamoyltransferase, catabolic.